Consider the following 320-residue polypeptide: Bifunctional ligase/repressor BirA (320 aa).

Residues 22 to 41 (GEQLGERLGMSRAAINKHIQ) constitute a DNA-binding region (H-T-H motif). The BPL/LPL catalytic domain occupies 66-254 (LLDADRIHSQ…KLRAALELFE (189 aa)). Biotin is bound by residues 89–91 (STN), Gln112, 116–118 (RGR), and Lys183.

This sequence belongs to the biotin--protein ligase family.

The catalysed reaction is biotin + L-lysyl-[protein] + ATP = N(6)-biotinyl-L-lysyl-[protein] + AMP + diphosphate + H(+). In terms of biological role, acts both as a biotin--[acetyl-CoA-carboxylase] ligase and a biotin-operon repressor. In the presence of ATP, BirA activates biotin to form the BirA-biotinyl-5'-adenylate (BirA-bio-5'-AMP or holoBirA) complex. HoloBirA can either transfer the biotinyl moiety to the biotin carboxyl carrier protein (BCCP) subunit of acetyl-CoA carboxylase, or bind to the biotin operator site and inhibit transcription of the operon. This chain is Bifunctional ligase/repressor BirA, found in Salmonella typhimurium (strain LT2 / SGSC1412 / ATCC 700720).